We begin with the raw amino-acid sequence, 368 residues long: Protein-glutamate methylesterase/protein-glutamine glutaminase 2 (368 aa).

Positions 6-123 constitute a Response regulatory domain; sequence KVLLVDDSAV…KEYLESAAGE (118 aa). D57 carries the 4-aspartylphosphate modification. A CheB-type methylesterase domain is found at 169-355; it reads IAGANKIAAL…SLERIPQCVL (187 aa). Residues S181, H207, and D303 contribute to the active site.

Belongs to the CheB family. In terms of processing, phosphorylated by CheA. Phosphorylation of the N-terminal regulatory domain activates the methylesterase activity.

Its subcellular location is the cytoplasm. The enzyme catalyses [protein]-L-glutamate 5-O-methyl ester + H2O = L-glutamyl-[protein] + methanol + H(+). The catalysed reaction is L-glutaminyl-[protein] + H2O = L-glutamyl-[protein] + NH4(+). Its function is as follows. Involved in chemotaxis. Part of a chemotaxis signal transduction system that modulates chemotaxis in response to various stimuli. Catalyzes the demethylation of specific methylglutamate residues introduced into the chemoreceptors (methyl-accepting chemotaxis proteins or MCP) by CheR. Also mediates the irreversible deamidation of specific glutamine residues to glutamic acid. The sequence is that of Protein-glutamate methylesterase/protein-glutamine glutaminase 2 from Hahella chejuensis (strain KCTC 2396).